A 142-amino-acid chain; its full sequence is MRNYDLSPLLRQWIGFDKLANALQNSGESQSFPPYNIEKSDDNHYRITLALAGFRQEDLDIQLEGTRLTVKGTPEQPENEPKWLHQGLVMQPFSLSFTLAENMEVSGATFTNGLLYIDLTRNEPETIPPQRIAINERSALNS.

Residues 26-137 (SGESQSFPPY…PPQRIAINER (112 aa)) enclose the sHSP domain.

The protein belongs to the small heat shock protein (HSP20) family. Homodimer. Forms homomultimers of about 100-150 subunits at optimal growth temperatures. Conformation changes to oligomers at high temperatures or high ionic concentrations. The decrease in size of the multimers is accompanied by an increase in chaperone activity.

It localises to the cytoplasm. In terms of biological role, associates with aggregated proteins, together with IbpA, to stabilize and protect them from irreversible denaturation and extensive proteolysis during heat shock and oxidative stress. Aggregated proteins bound to the IbpAB complex are more efficiently refolded and reactivated by the ATP-dependent chaperone systems ClpB and DnaK/DnaJ/GrpE. Its activity is ATP-independent. The chain is Small heat shock protein IbpB from Salmonella typhi.